We begin with the raw amino-acid sequence, 207 residues long: 2,3-bisphosphoglycerate-dependent phosphoglycerate mutase (207 aa).

Substrate contacts are provided by residues R10–N17, T23–G24, R62, E89–Y92, K100, R116–R117, and G160–N161. The active-site Tele-phosphohistidine intermediate is the H11. E89 acts as the Proton donor/acceptor in catalysis.

The protein belongs to the phosphoglycerate mutase family. BPG-dependent PGAM subfamily. As to quaternary structure, homodimer.

The catalysed reaction is (2R)-2-phosphoglycerate = (2R)-3-phosphoglycerate. The protein operates within carbohydrate degradation; glycolysis; pyruvate from D-glyceraldehyde 3-phosphate: step 3/5. Its function is as follows. Catalyzes the interconversion of 2-phosphoglycerate and 3-phosphoglycerate. This Nitrobacter winogradskyi (strain ATCC 25391 / DSM 10237 / CIP 104748 / NCIMB 11846 / Nb-255) protein is 2,3-bisphosphoglycerate-dependent phosphoglycerate mutase.